Reading from the N-terminus, the 432-residue chain is Adenylosuccinate synthetase (432 aa).

GTP-binding positions include 13 to 19 (GDEGKGK) and 41 to 43 (GHT). Catalysis depends on aspartate 14, which acts as the Proton acceptor. Residues aspartate 14 and glycine 41 each contribute to the Mg(2+) site. IMP-binding positions include 14 to 17 (DEGK), 39 to 42 (NAGH), threonine 130, arginine 144, glutamine 225, threonine 240, and arginine 304. Histidine 42 (proton donor) is an active-site residue. 300-306 (AVTGRPR) provides a ligand contact to substrate. Residues arginine 306, 332–334 (KLD), and 415–417 (STG) each bind GTP.

Belongs to the adenylosuccinate synthetase family. As to quaternary structure, homodimer. It depends on Mg(2+) as a cofactor.

The protein resides in the cytoplasm. It catalyses the reaction IMP + L-aspartate + GTP = N(6)-(1,2-dicarboxyethyl)-AMP + GDP + phosphate + 2 H(+). It participates in purine metabolism; AMP biosynthesis via de novo pathway; AMP from IMP: step 1/2. Functionally, plays an important role in the de novo pathway of purine nucleotide biosynthesis. Catalyzes the first committed step in the biosynthesis of AMP from IMP. The sequence is that of Adenylosuccinate synthetase from Haemophilus ducreyi (strain 35000HP / ATCC 700724).